We begin with the raw amino-acid sequence, 117 residues long: Ig heavy chain V-A2 region K-25 (117 aa).

Pyrrolidone carboxylic acid is present on Gln-1. In terms of domain architecture, Ig-like spans 1 to 106; it reads QSVKESEGGL…GLSYLKSSVD (106 aa). Cys-21 and Cys-91 are disulfide-bonded.

The protein is Ig heavy chain V-A2 region K-25 of Oryctolagus cuniculus (Rabbit).